The following is a 163-amino-acid chain: K88 minor fimbrial subunit FaeF (163 aa).

The signal sequence occupies residues 1-22 (MKKTMMAAALVLSALSIQSALA).

It is found in the fimbrium. Functionally, K88 minor fimbrial subunit, plays an essential role in the biogenesis of the K88 fimbriae. required at some step in the initiation and/or elongation of the K88 fimbriae. This Escherichia coli protein is K88 minor fimbrial subunit FaeF (faeF).